We begin with the raw amino-acid sequence, 142 residues long: C-type lectin 13 (142 aa).

The signal sequence occupies residues M1 to A23. 3 disulfide bridges follow: C25/C36, C53/C138, and C115/C130. In terms of domain architecture, C-type lectin spans Y32 to K139.

This sequence belongs to the snaclec family. Heteromultimer; disulfide-linked. Expressed by the venom gland.

It localises to the secreted. Its function is as follows. Interferes with one step of hemostasis (modulation of platelet aggregation, or coagulation cascade, for example). This chain is C-type lectin 13, found in Crotalus adamanteus (Eastern diamondback rattlesnake).